A 395-amino-acid polypeptide reads, in one-letter code: uncharacterized protein (395 aa).

The interval 247 to 270 (GGTVVPPNPDQPNPTPPDSSSPNY) is disordered. Residues 252–265 (PPNPDQPNPTPPDS) are compositionally biased toward pro residues.

This is an uncharacterized protein from Vibrio cholerae serotype O1 (strain ATCC 39315 / El Tor Inaba N16961).